A 293-amino-acid polypeptide reads, in one-letter code: GTPase Era (293 aa).

Residues 2–168 (KILFSTIIGR…INEIKKYSYE (167 aa)) enclose the Era-type G domain. Residues 10-17 (GRPNVGKS) form a G1 region. 10-17 (GRPNVGKS) is a binding site for GTP. A G2 region spans residues 36–40 (QATRD). The segment at 57–60 (DTPG) is G3. Residues 57-61 (DTPGI) and 118-121 (TKID) contribute to the GTP site. The G4 stretch occupies residues 118–121 (TKID). Positions 147-149 (ISS) are G5. In terms of domain architecture, KH type-2 spans 199–279 (LEQELPHSIL…KLFLKIKVKK (81 aa)).

The protein belongs to the TRAFAC class TrmE-Era-EngA-EngB-Septin-like GTPase superfamily. Era GTPase family. As to quaternary structure, monomer.

Its subcellular location is the cytoplasm. The protein resides in the cell membrane. Functionally, an essential GTPase that binds both GDP and GTP, with rapid nucleotide exchange. Plays a role in 16S rRNA processing and 30S ribosomal subunit biogenesis and possibly also in cell cycle regulation and energy metabolism. This Mycoplasmopsis pulmonis (strain UAB CTIP) (Mycoplasma pulmonis) protein is GTPase Era.